Reading from the N-terminus, the 120-residue chain is Glycine cleavage system H protein (120 aa).

The Lipoyl-binding domain maps to 17-99 (VATVGITNYA…QGAGWFFKLK (83 aa)). K58 carries the N6-lipoyllysine modification.

Belongs to the GcvH family. The glycine cleavage system is composed of four proteins: P, T, L and H. (R)-lipoate is required as a cofactor.

Its function is as follows. The glycine cleavage system catalyzes the degradation of glycine. The H protein shuttles the methylamine group of glycine from the P protein to the T protein. The polypeptide is Glycine cleavage system H protein (Rhizobium etli (strain ATCC 51251 / DSM 11541 / JCM 21823 / NBRC 15573 / CFN 42)).